A 99-amino-acid chain; its full sequence is Small ribosomal subunit protein eS24 (99 aa).

Belongs to the eukaryotic ribosomal protein eS24 family.

In Pyrococcus abyssi (strain GE5 / Orsay), this protein is Small ribosomal subunit protein eS24.